A 349-amino-acid polypeptide reads, in one-letter code: MVRAKRKLDHIEYALSTGQSRTHGFHDIDFVHQSLPNSSYDTITCETKIGELSLSSPIFINAMTGGGGEQTLHINEQLAYVAKHHNLAMAVGSQMAALKDESESASYKVVRKVNPNGIFFANLGSEATVEQAERAVDMIEANALQIHLNVIQELTMPEGDRDFTGVLQRIEKIVLKSKVPVIVKEVGFGMSKETVQQLANIGITAIDIGGQGGTNFAAVENERRQRMLSYFNNWGIQTATSIIEATSTNNNLSFIASGGIQTALDVAKAIALGANTTAFAGYFLRILMQDGVENLVDEIDLLHTDLKFIMTALGVKTIEELQSVPLVVKGETYHWLAQRGIDTAHYSRR.

6 to 7 (RK) lines the substrate pocket. FMN-binding positions include 62–64 (AMT), serine 93, and asparagine 122. Glutamine 152 contributes to the substrate binding site. Residue glutamate 153 participates in Mg(2+) binding. FMN contacts are provided by residues lysine 184, threonine 214, 258–259 (GG), and 280–281 (AG).

The protein belongs to the IPP isomerase type 2 family. Homooctamer. Dimer of tetramers. Requires FMN as cofactor. It depends on NADPH as a cofactor. Mg(2+) serves as cofactor.

The protein localises to the cytoplasm. It carries out the reaction isopentenyl diphosphate = dimethylallyl diphosphate. Its function is as follows. Involved in the biosynthesis of isoprenoids. Catalyzes the 1,3-allylic rearrangement of the homoallylic substrate isopentenyl (IPP) to its allylic isomer, dimethylallyl diphosphate (DMAPP). The chain is Isopentenyl-diphosphate delta-isomerase from Bacillus mycoides (strain KBAB4) (Bacillus weihenstephanensis).